A 181-amino-acid chain; its full sequence is Acireductone dioxygenase 2 (181 aa).

Fe(2+) contacts are provided by histidine 97, histidine 99, glutamate 103, and histidine 141. Ni(2+) is bound by residues histidine 97, histidine 99, glutamate 103, and histidine 141.

Belongs to the acireductone dioxygenase (ARD) family. As to quaternary structure, monomer. Fe(2+) serves as cofactor. Requires Ni(2+) as cofactor.

It catalyses the reaction 1,2-dihydroxy-5-(methylsulfanyl)pent-1-en-3-one + O2 = 3-(methylsulfanyl)propanoate + CO + formate + 2 H(+). It carries out the reaction 1,2-dihydroxy-5-(methylsulfanyl)pent-1-en-3-one + O2 = 4-methylsulfanyl-2-oxobutanoate + formate + 2 H(+). The protein operates within amino-acid biosynthesis; L-methionine biosynthesis via salvage pathway; L-methionine from S-methyl-5-thio-alpha-D-ribose 1-phosphate: step 5/6. Its function is as follows. Catalyzes 2 different reactions between oxygen and the acireductone 1,2-dihydroxy-3-keto-5-methylthiopentene (DHK-MTPene) depending upon the metal bound in the active site. Fe-containing acireductone dioxygenase (Fe-ARD) produces formate and 2-keto-4-methylthiobutyrate (KMTB), the alpha-ketoacid precursor of methionine in the methionine recycle pathway. Ni-containing acireductone dioxygenase (Ni-ARD) produces methylthiopropionate, carbon monoxide and formate, and does not lie on the methionine recycle pathway. This chain is Acireductone dioxygenase 2, found in Pectobacterium atrosepticum (strain SCRI 1043 / ATCC BAA-672) (Erwinia carotovora subsp. atroseptica).